The primary structure comprises 690 residues: Elongation factor G (690 aa).

The tr-type G domain maps to 8–282; that stretch reads EKTRNIGIMA…AVVAYMPSPL (275 aa). GTP-binding positions include 17 to 24, 81 to 85, and 135 to 138; these read AHIDAGKT, DTPGH, and NKMD.

Belongs to the TRAFAC class translation factor GTPase superfamily. Classic translation factor GTPase family. EF-G/EF-2 subfamily.

The protein resides in the cytoplasm. Catalyzes the GTP-dependent ribosomal translocation step during translation elongation. During this step, the ribosome changes from the pre-translocational (PRE) to the post-translocational (POST) state as the newly formed A-site-bound peptidyl-tRNA and P-site-bound deacylated tRNA move to the P and E sites, respectively. Catalyzes the coordinated movement of the two tRNA molecules, the mRNA and conformational changes in the ribosome. The polypeptide is Elongation factor G (Alkaliphilus oremlandii (strain OhILAs) (Clostridium oremlandii (strain OhILAs))).